The sequence spans 397 residues: Phosphoglycerate kinase (397 aa).

Substrate contacts are provided by residues 25 to 27 (DLN), arginine 41, 64 to 67 (HLGR), arginine 118, and arginine 151. Residues lysine 202, glutamate 324, and 350-353 (GGDT) contribute to the ATP site.

Belongs to the phosphoglycerate kinase family. As to quaternary structure, monomer.

Its subcellular location is the cytoplasm. It carries out the reaction (2R)-3-phosphoglycerate + ATP = (2R)-3-phospho-glyceroyl phosphate + ADP. Its pathway is carbohydrate degradation; glycolysis; pyruvate from D-glyceraldehyde 3-phosphate: step 2/5. In Acidovorax sp. (strain JS42), this protein is Phosphoglycerate kinase.